The sequence spans 485 residues: Warthog protein 1 (485 aa).

The N-terminal stretch at 1 to 21 (MMVMNPLTATFLAALIGTAAS) is a signal peptide. The disordered stretch occupies residues 236–258 (DQRLSPSTDVQSDSYVSPTEADP). A compositionally biased stretch (polar residues) spans 239–252 (LSPSTDVQSDSYVS).

Belongs to the hedgehog family. Post-translationally, the C-terminal domain displays an autoproteolysis activity.

The protein resides in the secreted. The protein localises to the cell surface. It localises to the cell membrane. It is found in the extracellular space. Intercellular signal essential for a variety of patterning events during development. The sequence is that of Warthog protein 1 (wrt-1) from Caenorhabditis elegans.